Reading from the N-terminus, the 417-residue chain is D-amino acid dehydrogenase (417 aa).

3 to 17 (VVILGSGVVGVSTAW) contributes to the FAD binding site.

Belongs to the DadA oxidoreductase family. FAD is required as a cofactor.

It carries out the reaction a D-alpha-amino acid + A + H2O = a 2-oxocarboxylate + AH2 + NH4(+). It participates in amino-acid degradation; D-alanine degradation; NH(3) and pyruvate from D-alanine: step 1/1. In terms of biological role, oxidative deamination of D-amino acids. In Pectobacterium atrosepticum (strain SCRI 1043 / ATCC BAA-672) (Erwinia carotovora subsp. atroseptica), this protein is D-amino acid dehydrogenase.